Consider the following 451-residue polypeptide: Bifunctional protein GlmU (451 aa).

The pyrophosphorylase stretch occupies residues 1-229 (MQRNAVILAA…FNEIMGVNDR (229 aa)). Residues 8–11 (LAAG), Lys22, Gln72, and 77–78 (GT) each bind UDP-N-acetyl-alpha-D-glucosamine. Asp102 serves as a coordination point for Mg(2+). Residues Gly139, Glu154, and Asn227 each contribute to the UDP-N-acetyl-alpha-D-glucosamine site. Mg(2+) is bound at residue Asn227. Residues 230 to 250 (VMLSNAEKALQQRINIEHMRN) form a linker region. Positions 251 to 451 (GVTIIDPTTT…QITKEGYLKK (201 aa)) are N-acetyltransferase. UDP-N-acetyl-alpha-D-glucosamine-binding residues include Arg332 and Lys350. Catalysis depends on His362, which acts as the Proton acceptor. UDP-N-acetyl-alpha-D-glucosamine contacts are provided by Tyr365 and Asn376. Acetyl-CoA-binding positions include 385–386 (NY), Ala422, and Arg439.

This sequence in the N-terminal section; belongs to the N-acetylglucosamine-1-phosphate uridyltransferase family. In the C-terminal section; belongs to the transferase hexapeptide repeat family. In terms of assembly, homotrimer. Mg(2+) is required as a cofactor.

Its subcellular location is the cytoplasm. It catalyses the reaction alpha-D-glucosamine 1-phosphate + acetyl-CoA = N-acetyl-alpha-D-glucosamine 1-phosphate + CoA + H(+). It carries out the reaction N-acetyl-alpha-D-glucosamine 1-phosphate + UTP + H(+) = UDP-N-acetyl-alpha-D-glucosamine + diphosphate. Its pathway is nucleotide-sugar biosynthesis; UDP-N-acetyl-alpha-D-glucosamine biosynthesis; N-acetyl-alpha-D-glucosamine 1-phosphate from alpha-D-glucosamine 6-phosphate (route II): step 2/2. It functions in the pathway nucleotide-sugar biosynthesis; UDP-N-acetyl-alpha-D-glucosamine biosynthesis; UDP-N-acetyl-alpha-D-glucosamine from N-acetyl-alpha-D-glucosamine 1-phosphate: step 1/1. It participates in bacterial outer membrane biogenesis; LPS lipid A biosynthesis. Functionally, catalyzes the last two sequential reactions in the de novo biosynthetic pathway for UDP-N-acetylglucosamine (UDP-GlcNAc). The C-terminal domain catalyzes the transfer of acetyl group from acetyl coenzyme A to glucosamine-1-phosphate (GlcN-1-P) to produce N-acetylglucosamine-1-phosphate (GlcNAc-1-P), which is converted into UDP-GlcNAc by the transfer of uridine 5-monophosphate (from uridine 5-triphosphate), a reaction catalyzed by the N-terminal domain. In Staphylococcus haemolyticus (strain JCSC1435), this protein is Bifunctional protein GlmU.